Reading from the N-terminus, the 875-residue chain is Ribonucleases P/MRP protein subunit POP1 (875 aa).

Disordered stretches follow at residues 1–20, 35–54, and 119–140; these read MSGS…KNQL, EAVA…SESG, and EMRK…RKAH. Positions 39–54 are enriched in polar residues; it reads ASSTKTGTPSDLSESG. At T524 the chain carries Phosphothreonine.

As to quaternary structure, component of nuclear RNase P and RNase MRP complexes. RNase P consists of an RNA moiety and at least 9 protein subunits including POP1, POP3, POP4, POP5, POP6, POP7, POP8, RPP1 and RPR2. RNase MRP complex consists of an RNA moiety and at least 10 protein subunits including POP1, POP3, POP4, POP5, POP6, POP7, POP8, RMP1, RPP1 and SNM1, many of which are shared with the RNase P complex.

The protein localises to the cytoplasm. Its subcellular location is the nucleus. It catalyses the reaction Endonucleolytic cleavage of RNA, removing 5'-extranucleotides from tRNA precursor.. Its function is as follows. Required for processing of 5.8S rRNA (short form) at site A3 and for 5' and 3' processing of pre-tRNA. The chain is Ribonucleases P/MRP protein subunit POP1 (POP1) from Saccharomyces cerevisiae (strain ATCC 204508 / S288c) (Baker's yeast).